Reading from the N-terminus, the 705-residue chain is Gamma-adducin (705 aa).

The span at 1 to 10 (MSSDTSQAVI) shows a compositional bias: polar residues. A disordered region spans residues 1 to 22 (MSSDTSQAVITTPPPPSMPHKE). Ser2 carries the post-translational modification N-acetylserine. Phosphoserine is present on residues Ser31, Ser42, Ser64, Ser402, Ser414, Ser423, Ser442, and Ser461. 4 disordered regions span residues 472–495 (EDPS…VPLN), 535–556 (PSTM…PFSH), 572–612 (KQQG…EENH), and 658–705 (EITI…KVEA). Residue Lys484 forms a Glycyl lysine isopeptide (Lys-Gly) (interchain with G-Cter in SUMO2) linkage. 7 positions are modified to phosphoserine: Ser583, Ser585, Ser590, Ser672, Ser676, Ser678, and Ser680. Residues 590 to 605 (SVSQIQSQTQSPQSVP) show a composition bias toward low complexity. Over residues 681–705 (PSKKKKKFRTPSFLKKNKKKEKVEA) the composition is skewed to basic residues. At Ser682 the chain carries Phosphoserine; by PKC. The segment at 683 to 700 (KKKKKFRTPSFLKKNKKK) is interaction with calmodulin.

The protein belongs to the aldolase class II family. Adducin subfamily. In terms of assembly, heterodimer of an alpha and a gamma subunit. In terms of processing, sumoylated. Proteolytically cleaved by asparagine endopeptidase (AEP) into 2 fragments. Overexpression of the 1-357 fragment induces neuronal apoptosis, and overexpression of either 1-357 or 358-706 fragment increases the degeneration of dendritic spines. Overexpression of the 1-357 fragment impairs neurite outgrowth by downregulating the expression of Rac2, and induces synaptic dysfunction and cognitive impairments in tau P301S transgenic mice, a mouse model for Alzheimer disease (AD). In terms of tissue distribution, expressed in kidney, brain, spleen, liver and heart. As to expression, expressed in renal interlobular arteries, afferent/efferent arterioles, parietal glomerular epithelial cells and microvilli of the luminal surface of the proximal tubule (at protein level). Expressed in podocytes (at protein level) Expressed in renal cortex (at protein level). Expressed in primary vascular smooth muscle cells (VSMCs) of the kidney (at protein level). Expressed in tubular cells and glomeruli (at protein level).

It is found in the cytoplasm. Its subcellular location is the cytoskeleton. The protein resides in the cell membrane. In terms of biological role, membrane-cytoskeleton-associated protein that promotes the assembly of the spectrin-actin network. Plays a role in actin filament capping. Binds to calmodulin. Involved in myogenic reactivity of the renal afferent arteriole (Af-art), renal interlobular arteries and middle cerebral artery (MCA) to increased perfusion pressure. Involved in regulation of potassium channels in the vascular smooth muscle cells (VSMCs) of the Af-art and MCA ex vivo. Involved in regulation of glomerular capillary pressure, glomerular filtration rate (GFR) and glomerular nephrin expression in response to hypertension. Involved in renal blood flow (RBF) autoregulation. Plays a role in podocyte structure and function. Regulates globular monomer actin (G-actin) and filamentous polymer actin (F-actin) ratios in the primary podocytes affecting actin cytoskeleton organization. Regulates expression of synaptopodin, RhoA, Rac1 and CDC42 in the renal cortex and the primary podocytes. Regulates expression of nephrin in the glomeruli and in the primary podocytes, expression of nephrin and podocinin in the renal cortex, and expression of focal adhesion proteins integrin alpha-3 and integrin beta-1 in the glomeruli. Involved in cell migration and cell adhesion of podocytes, and in podocyte foot process effacement. Regulates expression of profibrotics markers MMP2, MMP9, TGF beta-1, tubular tight junction protein E-cadherin, and mesenchymal markers vimentin and alpha-SMA. Promotes the growth of neurites. The polypeptide is Gamma-adducin (Add3) (Rattus norvegicus (Rat)).